A 647-amino-acid polypeptide reads, in one-letter code: tRNA 5-methylaminomethyl-2-thiouridine biosynthesis bifunctional protein MnmC (647 aa).

Residues 1-227 (MLTWKNNLTP…KREMLIGSYS (227 aa)) form a tRNA (mnm(5)s(2)U34)-methyltransferase region. The tract at residues 256 to 647 (VGAGIAGTTL…ARFLYRKVRK (392 aa)) is FAD-dependent cmnm(5)s(2)U34 oxidoreductase.

It in the N-terminal section; belongs to the methyltransferase superfamily. tRNA (mnm(5)s(2)U34)-methyltransferase family. In the C-terminal section; belongs to the DAO family. FAD is required as a cofactor.

The protein resides in the cytoplasm. The catalysed reaction is 5-aminomethyl-2-thiouridine(34) in tRNA + S-adenosyl-L-methionine = 5-methylaminomethyl-2-thiouridine(34) in tRNA + S-adenosyl-L-homocysteine + H(+). In terms of biological role, catalyzes the last two steps in the biosynthesis of 5-methylaminomethyl-2-thiouridine (mnm(5)s(2)U) at the wobble position (U34) in tRNA. Catalyzes the FAD-dependent demodification of cmnm(5)s(2)U34 to nm(5)s(2)U34, followed by the transfer of a methyl group from S-adenosyl-L-methionine to nm(5)s(2)U34, to form mnm(5)s(2)U34. The sequence is that of tRNA 5-methylaminomethyl-2-thiouridine biosynthesis bifunctional protein MnmC from Leptospira interrogans serogroup Icterohaemorrhagiae serovar Lai (strain 56601).